We begin with the raw amino-acid sequence, 648 residues long: Translation factor GUF1 homolog, mitochondrial (648 aa).

The region spanning 55 to 247 (ERVRNFSIIA…AVIERIPSPP (193 aa)) is the tr-type G domain. Residues 64-71 (AHVDHGKS), 140-144 (DTPGH), and 194-197 (NKID) contribute to the GTP site.

It belongs to the TRAFAC class translation factor GTPase superfamily. Classic translation factor GTPase family. LepA subfamily.

It localises to the mitochondrion inner membrane. It carries out the reaction GTP + H2O = GDP + phosphate + H(+). Its function is as follows. Promotes mitochondrial protein synthesis. May act as a fidelity factor of the translation reaction, by catalyzing a one-codon backward translocation of tRNAs on improperly translocated ribosomes. Binds to mitochondrial ribosomes in a GTP-dependent manner. In Oryza sativa subsp. indica (Rice), this protein is Translation factor GUF1 homolog, mitochondrial.